Here is a 122-residue protein sequence, read N- to C-terminus: Beta-2-microglobulin (122 aa).

The signal sequence occupies residues 1 to 23 (MFLRSTFVAALVACLAYIHLGDA). The Ig-like C1-type domain occupies 28–117 (PKVQIYSRNV…STLREATRFT (90 aa)). Cys-48 and Cys-103 are disulfide-bonded.

The protein belongs to the beta-2-microglobulin family. In terms of assembly, heterodimer of an alpha chain and a beta chain. Beta-2-microglobulin is the beta-chain of major histocompatibility complex class I molecules.

Its subcellular location is the secreted. Functionally, component of the class I major histocompatibility complex (MHC). Involved in the presentation of peptide antigens to the immune system. This Acipenser baerii (Siberian sturgeon) protein is Beta-2-microglobulin (b2m).